The chain runs to 34 residues: Non-toxic venom protein (34 aa).

Positions 1 to 34 constitute an LCN-type CS-alpha/beta domain; sequence KEGYPTNSEGCKITXLFNDPYCKGXCINLSTQAD.

Expressed by the venom gland.

The protein resides in the secreted. Functionally, does not cause symptoms of intoxication, paralysis or death in insects (A.domestica). The sequence is that of Non-toxic venom protein from Rhopalurus junceus (Caribbean blue scorpion).